The chain runs to 166 residues: Small ribosomal subunit protein uS5 (166 aa).

The region spanning 11-74 (LQEKLIAVNR…EKARRNMINV (64 aa)) is the S5 DRBM domain.

The protein belongs to the universal ribosomal protein uS5 family. As to quaternary structure, part of the 30S ribosomal subunit. Contacts proteins S4 and S8.

With S4 and S12 plays an important role in translational accuracy. In terms of biological role, located at the back of the 30S subunit body where it stabilizes the conformation of the head with respect to the body. This Actinobacillus pleuropneumoniae serotype 5b (strain L20) protein is Small ribosomal subunit protein uS5.